Reading from the N-terminus, the 616-residue chain is Glucoamylase P (616 aa).

A signal peptide spans 1 to 29; it reads MRLLPSSCAGALSLLCSLAIAAPTELKAR. Tryptophan 149 is a binding site for substrate. N-linked (GlcNAc...) asparagine glycosylation occurs at asparagine 200. The active-site Proton acceptor is the aspartate 205. Glutamate 208 (proton donor) is an active-site residue. An N-linked (GlcNAc...) asparagine glycan is attached at asparagine 427. The region spanning 501-608 is the CBM20 domain; that stretch reads VTSSCQVSIT…AVTTDDAWMG (108 aa).

It belongs to the glycosyl hydrolase 15 family.

The protein localises to the secreted. It carries out the reaction Hydrolysis of terminal (1-&gt;4)-linked alpha-D-glucose residues successively from non-reducing ends of the chains with release of beta-D-glucose.. This is Glucoamylase P (GAMP) from Amorphotheca resinae (Creosote fungus).